The primary structure comprises 414 residues: Isocitrate dehydrogenase [NADP] cytoplasmic (414 aa).

Ser-2 is modified (N-acetylserine). Tyr-42 carries the post-translational modification Phosphotyrosine. 75–77 is a binding site for NADP(+); that stretch reads TIT. Thr-77 lines the substrate pocket. The residue at position 81 (Lys-81) is an N6-acetyllysine. Arg-82 contacts NADP(+). Substrate contacts are provided by residues 94–100 and Arg-109; that span reads SPNGTIR. At Lys-126 the chain carries N6-succinyllysine. Arg-132 and Lys-212 together coordinate substrate. N6-acetyllysine is present on residues Lys-224, Lys-233, and Lys-243. Residue Asp-252 participates in Mn(2+) binding. Lys-260 contacts NADP(+). Mn(2+) contacts are provided by Asp-275 and Asp-279. An NADP(+)-binding site is contributed by 310 to 315; sequence GTVTRH. Lys-321 carries the post-translational modification N6-acetyllysine. Asn-328 contributes to the NADP(+) binding site. A Phosphoserine modification is found at Ser-389. Position 400 is an N6-succinyllysine (Lys-400).

Belongs to the isocitrate and isopropylmalate dehydrogenases family. In terms of assembly, homodimer. Mg(2+) is required as a cofactor. The cofactor is Mn(2+). In terms of processing, acetylation at Lys-374 dramatically reduces catalytic activity.

It is found in the cytoplasm. The protein resides in the cytosol. The catalysed reaction is D-threo-isocitrate + NADP(+) = 2-oxoglutarate + CO2 + NADPH. In terms of biological role, catalyzes the NADP(+)-dependent oxidative decarboxylation of isocitrate (D-threo-isocitrate) to 2-ketoglutarate (2-oxoglutarate), which is required by other enzymes such as the phytanoyl-CoA dioxygenase. Plays a critical role in the generation of NADPH, an important cofactor in many biosynthesis pathways. May act as a corneal epithelial crystallin and may be involved in maintaining corneal epithelial transparency. This Microtus mexicanus (Mexican vole) protein is Isocitrate dehydrogenase [NADP] cytoplasmic (IDH1).